We begin with the raw amino-acid sequence, 289 residues long: Cbb3-type cytochrome c oxidase subunit FixP (289 aa).

The Cytoplasmic portion of the chain corresponds to Met1–Arg33. The helical transmembrane segment at Trp34–Trp56 threads the bilayer. Over Pro57 to Glu289 the chain is Periplasmic. 2 consecutive Cytochrome c domains span residues Phe110–Thr198 and His205–Gly286. Cys123, Cys126, His127, Met175, Cys218, Cys221, His222, and Met263 together coordinate heme c.

This sequence belongs to the CcoP / FixP family. Component of the cbb3-type cytochrome c oxidase at least composed of FixN, FixO, FixQ and FixP. Requires heme c as cofactor.

The protein resides in the cell inner membrane. The protein operates within energy metabolism; oxidative phosphorylation. In terms of biological role, C-type cytochrome. Part of the cbb3-type cytochrome c oxidase complex. FixP subunit is required for transferring electrons from donor cytochrome c via its heme groups to FixO subunit. From there, electrons are shuttled to the catalytic binuclear center of FixN subunit where oxygen reduction takes place. The complex also functions as a proton pump. This chain is Cbb3-type cytochrome c oxidase subunit FixP, found in Rhizobium meliloti (strain 1021) (Ensifer meliloti).